Here is a 499-residue protein sequence, read N- to C-terminus: Apolipoprotein N-acyltransferase (499 aa).

Transmembrane regions (helical) follow at residues 17 to 37 (VLAGIGIAHGGLLWMAPALAL), 38 to 58 (LWSACRFPVAASLWGFVAVLL), 84 to 104 (ASIWLFCGAAAAVLVGLWAWL), 131 to 151 (IWGLAEVLLAGSPLFWIGVGG), 163 to 183 (LARWFGAGGLATLQLLIGWWL), and 198 to 218 (RSLLVGLLCLLLAHGFGWSLL). The 227-residue stretch at 232 to 458 (WQPAIPTRSK…EGVGLADLHF (227 aa)) folds into the CN hydrolase domain. The active-site Proton acceptor is the E273. Residue K322 is part of the active site. The Nucleophile role is filled by C370. The helical transmembrane segment at 474–494 (IGLMLFAVVGLGLSRVRSWLI) threads the bilayer.

It belongs to the CN hydrolase family. Apolipoprotein N-acyltransferase subfamily.

The protein resides in the cell inner membrane. The enzyme catalyses N-terminal S-1,2-diacyl-sn-glyceryl-L-cysteinyl-[lipoprotein] + a glycerophospholipid = N-acyl-S-1,2-diacyl-sn-glyceryl-L-cysteinyl-[lipoprotein] + a 2-acyl-sn-glycero-3-phospholipid + H(+). It functions in the pathway protein modification; lipoprotein biosynthesis (N-acyl transfer). Functionally, catalyzes the phospholipid dependent N-acylation of the N-terminal cysteine of apolipoprotein, the last step in lipoprotein maturation. The protein is Apolipoprotein N-acyltransferase of Prochlorococcus marinus (strain MIT 9313).